Here is a 314-residue protein sequence, read N- to C-terminus: Methionyl-tRNA formyltransferase (314 aa).

112 to 115 contributes to the (6S)-5,6,7,8-tetrahydrofolate binding site; that stretch reads SLLP.

This sequence belongs to the Fmt family.

The catalysed reaction is L-methionyl-tRNA(fMet) + (6R)-10-formyltetrahydrofolate = N-formyl-L-methionyl-tRNA(fMet) + (6S)-5,6,7,8-tetrahydrofolate + H(+). Its function is as follows. Attaches a formyl group to the free amino group of methionyl-tRNA(fMet). The formyl group appears to play a dual role in the initiator identity of N-formylmethionyl-tRNA by promoting its recognition by IF2 and preventing the misappropriation of this tRNA by the elongation apparatus. The protein is Methionyl-tRNA formyltransferase of Tolumonas auensis (strain DSM 9187 / NBRC 110442 / TA 4).